Here is a 314-residue protein sequence, read N- to C-terminus: tRNA-cytidine(32) 2-sulfurtransferase (314 aa).

The PP-loop motif motif lies at 39–44 (SGGKDS). [4Fe-4S] cluster is bound by residues Cys-114, Cys-117, and Cys-205.

The protein belongs to the TtcA family. In terms of assembly, homodimer. Mg(2+) serves as cofactor. [4Fe-4S] cluster is required as a cofactor.

The protein resides in the cytoplasm. The enzyme catalyses cytidine(32) in tRNA + S-sulfanyl-L-cysteinyl-[cysteine desulfurase] + AH2 + ATP = 2-thiocytidine(32) in tRNA + L-cysteinyl-[cysteine desulfurase] + A + AMP + diphosphate + H(+). It participates in tRNA modification. In terms of biological role, catalyzes the ATP-dependent 2-thiolation of cytidine in position 32 of tRNA, to form 2-thiocytidine (s(2)C32). The sulfur atoms are provided by the cysteine/cysteine desulfurase (IscS) system. The polypeptide is tRNA-cytidine(32) 2-sulfurtransferase (Cupriavidus necator (strain ATCC 17699 / DSM 428 / KCTC 22496 / NCIMB 10442 / H16 / Stanier 337) (Ralstonia eutropha)).